Here is a 185-residue protein sequence, read N- to C-terminus: Probable calcium-binding protein CML10 (185 aa).

Residues 1-41 (MVKIKMPALFRRRSGSKSPPLPQADPASGGGSPAPTPEEEM) form a disordered region. 4 consecutive EF-hand domains span residues 36–71 (TPEE…LGHA), 72–107 (ATDD…ASGD), 110–145 (AVEE…LGEK), and 146–181 (ATVQ…GGSF). Residues aspartate 49, asparagine 51, aspartate 53, arginine 55, glutamate 60, aspartate 85, aspartate 87, aspartate 89, glutamate 96, aspartate 123, aspartate 125, asparagine 127, threonine 129, glutamate 134, aspartate 159, asparagine 161, aspartate 163, and glutamate 170 each coordinate Ca(2+).

Functionally, potential calcium sensor. This is Probable calcium-binding protein CML10 (CML10) from Oryza sativa subsp. japonica (Rice).